The chain runs to 79 residues: Sec-independent protein translocase protein TatA (79 aa).

Residues 1-21 (MGGFTSIWHWVIVLLVIVLLF) form a helical membrane-spanning segment. The disordered stretch occupies residues 48–79 (EEEAKNEPKTLDAQVAQTKVHETSEIKSKQES). The segment covering 66–79 (KVHETSEIKSKQES) has biased composition (basic and acidic residues).

This sequence belongs to the TatA/E family. In terms of assembly, the Tat system comprises two distinct complexes: a TatABC complex, containing multiple copies of TatA, TatB and TatC subunits, and a separate TatA complex, containing only TatA subunits. Substrates initially bind to the TatABC complex, which probably triggers association of the separate TatA complex to form the active translocon.

The protein localises to the cell inner membrane. In terms of biological role, part of the twin-arginine translocation (Tat) system that transports large folded proteins containing a characteristic twin-arginine motif in their signal peptide across membranes. TatA could form the protein-conducting channel of the Tat system. The chain is Sec-independent protein translocase protein TatA from Helicobacter pylori (strain Shi470).